Here is a 321-residue protein sequence, read N- to C-terminus: Methionyl-tRNA formyltransferase (321 aa).

Residue 112 to 115 (SILP) participates in (6S)-5,6,7,8-tetrahydrofolate binding.

Belongs to the Fmt family.

It catalyses the reaction L-methionyl-tRNA(fMet) + (6R)-10-formyltetrahydrofolate = N-formyl-L-methionyl-tRNA(fMet) + (6S)-5,6,7,8-tetrahydrofolate + H(+). Functionally, attaches a formyl group to the free amino group of methionyl-tRNA(fMet). The formyl group appears to play a dual role in the initiator identity of N-formylmethionyl-tRNA by promoting its recognition by IF2 and preventing the misappropriation of this tRNA by the elongation apparatus. This is Methionyl-tRNA formyltransferase from Shewanella piezotolerans (strain WP3 / JCM 13877).